A 251-amino-acid chain; its full sequence is tRNA (guanine-N(7)-)-methyltransferase (251 aa).

S-adenosyl-L-methionine-binding residues include E80, E105, D132, and D155. D155 is a catalytic residue. Residues K159, D191, and 228–231 each bind substrate; that span reads TKFE.

The protein belongs to the class I-like SAM-binding methyltransferase superfamily. TrmB family.

The catalysed reaction is guanosine(46) in tRNA + S-adenosyl-L-methionine = N(7)-methylguanosine(46) in tRNA + S-adenosyl-L-homocysteine. It functions in the pathway tRNA modification; N(7)-methylguanine-tRNA biosynthesis. Catalyzes the formation of N(7)-methylguanine at position 46 (m7G46) in tRNA. The sequence is that of tRNA (guanine-N(7)-)-methyltransferase from Histophilus somni (strain 129Pt) (Haemophilus somnus).